Consider the following 427-residue polypeptide: Adenylosuccinate synthetase (427 aa).

Residues 12–18 (GDEGKGK) and 40–42 (GHT) contribute to the GTP site. D13 acts as the Proton acceptor in catalysis. Residues D13 and G40 each contribute to the Mg(2+) site. Residues 13-16 (DEGK), 38-41 (NAGH), T128, R142, Q223, T238, and R302 contribute to the IMP site. The active-site Proton donor is H41. Substrate is bound at residue 298–304 (VTTGRAR). Residues R304, 330–332 (KLD), and 412–414 (GVG) each bind GTP.

This sequence belongs to the adenylosuccinate synthetase family. Homodimer. It depends on Mg(2+) as a cofactor.

Its subcellular location is the cytoplasm. It carries out the reaction IMP + L-aspartate + GTP = N(6)-(1,2-dicarboxyethyl)-AMP + GDP + phosphate + 2 H(+). It functions in the pathway purine metabolism; AMP biosynthesis via de novo pathway; AMP from IMP: step 1/2. Plays an important role in the de novo pathway of purine nucleotide biosynthesis. Catalyzes the first committed step in the biosynthesis of AMP from IMP. This is Adenylosuccinate synthetase from Frankia casuarinae (strain DSM 45818 / CECT 9043 / HFP020203 / CcI3).